The primary structure comprises 250 residues: Pyrroloquinoline-quinone synthase (250 aa).

Belongs to the PqqC family.

The catalysed reaction is 6-(2-amino-2-carboxyethyl)-7,8-dioxo-1,2,3,4,7,8-hexahydroquinoline-2,4-dicarboxylate + 3 O2 = pyrroloquinoline quinone + 2 H2O2 + 2 H2O + H(+). Its pathway is cofactor biosynthesis; pyrroloquinoline quinone biosynthesis. Its function is as follows. Ring cyclization and eight-electron oxidation of 3a-(2-amino-2-carboxyethyl)-4,5-dioxo-4,5,6,7,8,9-hexahydroquinoline-7,9-dicarboxylic-acid to PQQ. The sequence is that of Pyrroloquinoline-quinone synthase from Ectopseudomonas mendocina (strain ymp) (Pseudomonas mendocina).